We begin with the raw amino-acid sequence, 180 residues long: Protein SPO16 homolog (180 aa).

As to quaternary structure, homooligomer. Interacts with SHOC, SYCP1 and SYCE3.

It is found in the chromosome. In terms of biological role, plays a key role in reinforcing the integrity of the central element of the synaptonemal complex (SC) thereby stabilizing SC, ensuring progression of meiotic prophase I in male and female germ cells. Promotes homologous recombination and crossing-over in meiotic prophase I via its association with SHOC1. Required for the localization of TEX11 and MSH4 to recombination intermediates. This is Protein SPO16 homolog from Homo sapiens (Human).